The chain runs to 588 residues: DNA ligase (588 aa).

E248 contacts ATP. K250 serves as the catalytic N6-AMP-lysine intermediate. 6 residues coordinate ATP: R255, R270, E300, F341, R418, and K424.

Belongs to the ATP-dependent DNA ligase family. The cofactor is Mg(2+).

The enzyme catalyses ATP + (deoxyribonucleotide)n-3'-hydroxyl + 5'-phospho-(deoxyribonucleotide)m = (deoxyribonucleotide)n+m + AMP + diphosphate.. DNA ligase that seals nicks in double-stranded DNA during DNA replication, DNA recombination and DNA repair. In Thermoplasma volcanium (strain ATCC 51530 / DSM 4299 / JCM 9571 / NBRC 15438 / GSS1), this protein is DNA ligase.